The chain runs to 294 residues: 4-hydroxy-tetrahydrodipicolinate synthase (294 aa).

S47 is a pyruvate binding site. Residue Y135 is the Proton donor/acceptor of the active site. The active-site Schiff-base intermediate with substrate is the K163. I205 contacts pyruvate.

This sequence belongs to the DapA family. As to quaternary structure, homotetramer; dimer of dimers.

The protein resides in the cytoplasm. The catalysed reaction is L-aspartate 4-semialdehyde + pyruvate = (2S,4S)-4-hydroxy-2,3,4,5-tetrahydrodipicolinate + H2O + H(+). Its pathway is amino-acid biosynthesis; L-lysine biosynthesis via DAP pathway; (S)-tetrahydrodipicolinate from L-aspartate: step 3/4. Its function is as follows. Catalyzes the condensation of (S)-aspartate-beta-semialdehyde [(S)-ASA] and pyruvate to 4-hydroxy-tetrahydrodipicolinate (HTPA). The chain is 4-hydroxy-tetrahydrodipicolinate synthase from Ralstonia nicotianae (strain ATCC BAA-1114 / GMI1000) (Ralstonia solanacearum).